The chain runs to 620 residues: Membralin (620 aa).

The interval methionine 1–asparagine 33 is disordered. An N-acetylserine modification is found at serine 2. Residues alanine 22–asparagine 31 are compositionally biased toward low complexity. Threonine 29 carries the post-translational modification Phosphothreonine. Residues phenylalanine 70–phenylalanine 90 form a helical membrane-spanning segment. Asparagine 189 carries N-linked (GlcNAc...) asparagine glycosylation. Transmembrane regions (helical) follow at residues threonine 302–leucine 322, isoleucine 346–isoleucine 366, and tyrosine 426–phenylalanine 446. Disordered regions lie at residues threonine 474–alanine 517 and serine 568–serine 620. Low complexity-rich tracts occupy residues proline 499–alanine 517 and serine 568–aspartate 593.

Belongs to the membralin family. Interacts with ERLIN2.

The protein resides in the endoplasmic reticulum membrane. May have a role in the ERAD pathway required for clearance of misfolded proteins in the endoplasmic reticulum (ER). Promotes survival of motor neurons, probably by protecting against ER stress. This chain is Membralin (TMEM259), found in Homo sapiens (Human).